An 842-amino-acid chain; its full sequence is Elongation factor 2 (842 aa).

One can recognise a tr-type G domain in the interval 17–253 (TNVRNMSVIA…LWGDSYFNPK (237 aa)). Residues 26–33 (AHVDHGKS), 158–161 (NKVD), and 213–215 (SGL) contribute to the GTP site. A Diphthamide modification is found at His699.

Belongs to the TRAFAC class translation factor GTPase superfamily. Classic translation factor GTPase family. EF-G/EF-2 subfamily.

Its subcellular location is the cytoplasm. It carries out the reaction GTP + H2O = GDP + phosphate + H(+). In terms of biological role, catalyzes the GTP-dependent ribosomal translocation step during translation elongation. During this step, the ribosome changes from the pre-translocational (PRE) to the post-translocational (POST) state as the newly formed A-site-bound peptidyl-tRNA and P-site-bound deacylated tRNA move to the P and E sites, respectively. Catalyzes the coordinated movement of the two tRNA molecules, the mRNA and conformational changes in the ribosome. The polypeptide is Elongation factor 2 (EFT1) (Naumovozyma castellii (Yeast)).